The primary structure comprises 370 residues: Mitogen-activated protein kinase 3 (370 aa).

The Protein kinase domain occupies 32 to 319; sequence YVPIKPIGRG…VTEALEHPYM (288 aa). ATP-binding positions include 38–46 and lysine 61; that span reads IGRGAYGIV. The active-site Proton acceptor is the aspartate 158. At threonine 191 the chain carries Phosphothreonine. The short motif at 191–193 is the TXY element; sequence TEY. A Phosphotyrosine modification is found at tyrosine 193.

Belongs to the protein kinase superfamily. CMGC Ser/Thr protein kinase family. MAP kinase subfamily. Dually phosphorylated on Thr-191 and Tyr-193, which activates the enzyme.

It catalyses the reaction L-seryl-[protein] + ATP = O-phospho-L-seryl-[protein] + ADP + H(+). It carries out the reaction L-threonyl-[protein] + ATP = O-phospho-L-threonyl-[protein] + ADP + H(+). Activated by threonine and tyrosine phosphorylation. This Oryza sativa subsp. japonica (Rice) protein is Mitogen-activated protein kinase 3 (MPK3).